The primary structure comprises 207 residues: Outer-membrane lipoprotein LolB (207 aa).

The first 26 residues, 1–26 (MSKLKIDTKRRFSLLIALVLIISLSS), serve as a signal peptide directing secretion. Residue Cys-27 is the site of N-palmitoyl cysteine attachment. The S-diacylglycerol cysteine moiety is linked to residue Cys-27.

It belongs to the LolB family. Monomer.

It localises to the cell outer membrane. Plays a critical role in the incorporation of lipoproteins in the outer membrane after they are released by the LolA protein. The polypeptide is Outer-membrane lipoprotein LolB (Francisella tularensis subsp. tularensis (strain WY96-3418)).